Reading from the N-terminus, the 595-residue chain is Acriflavine sensitivity control protein acr-2 (595 aa).

The segment at residues 22–49 is a DNA-binding region (zn(2)-C6 fungal-type); the sequence is CYNCHRKRLRCDKSLPACLKCSINGEEC. The span at 69–88 shows a compositional bias: low complexity; it reads TTRTTNKTNFNGTNTTTPRT. Residues 69-172 form a disordered region; sequence TTRTTNKTNF…PDDNPDPSSQ (104 aa). The segment covering 89–117 has biased composition (polar residues); sequence VKSSTPTQAPTPSDSPRQLDTDVTSSSAP. Low complexity predominate over residues 118–138; it reads SHTCSRSTTTSTTTTRISSPT.

The protein resides in the nucleus. In terms of biological role, probable transcriptional regulator. This is Acriflavine sensitivity control protein acr-2 (acr-2) from Neurospora crassa (strain ATCC 24698 / 74-OR23-1A / CBS 708.71 / DSM 1257 / FGSC 987).